Reading from the N-terminus, the 146-residue chain is U-scoloptoxin(16)-Er1a (146 aa).

An N-terminal signal peptide occupies residues 1–26 (MNTVSVVQFLAVGCAVFVLYGRGVFA).

The protein belongs to the scoloptoxin-16 family. In terms of processing, contains 4 disulfide bonds. In terms of tissue distribution, expressed by the venom gland.

The protein localises to the secreted. The polypeptide is U-scoloptoxin(16)-Er1a (Ethmostigmus rubripes (Giant centipede)).